Consider the following 430-residue polypeptide: UDP-N-acetylglucosamine 1-carboxyvinyltransferase (430 aa).

22–23 serves as a coordination point for phosphoenolpyruvate; that stretch reads KN. Arg102 is a UDP-N-acetyl-alpha-D-glucosamine binding site. The Proton donor role is filled by Cys126. The residue at position 126 (Cys126) is a 2-(S-cysteinyl)pyruvic acid O-phosphothioketal. Residues 131-135, 172-175, Asp317, and Ile339 contribute to the UDP-N-acetyl-alpha-D-glucosamine site; these read RPVDL and KVSV.

This sequence belongs to the EPSP synthase family. MurA subfamily.

It is found in the cytoplasm. It catalyses the reaction phosphoenolpyruvate + UDP-N-acetyl-alpha-D-glucosamine = UDP-N-acetyl-3-O-(1-carboxyvinyl)-alpha-D-glucosamine + phosphate. It participates in cell wall biogenesis; peptidoglycan biosynthesis. In terms of biological role, cell wall formation. Adds enolpyruvyl to UDP-N-acetylglucosamine. The sequence is that of UDP-N-acetylglucosamine 1-carboxyvinyltransferase from Sinorhizobium fredii (strain NBRC 101917 / NGR234).